Consider the following 329-residue polypeptide: GTPase Obg (329 aa).

One can recognise an Obg domain in the interval 1–159 (MQFIDQARIT…WFLQLELKLL (159 aa)). Residues 160 to 328 (AEVGIIGLPN…LLAQVWKELG (169 aa)) enclose the OBG-type G domain. ATP-binding positions include 166-173 (GLPNAGKS), 191-195 (FTTLV), 213-216 (DIPG), 280-283 (NKQE), and 309-311 (SAA). Residues S173 and T193 each contribute to the Mg(2+) site.

Belongs to the TRAFAC class OBG-HflX-like GTPase superfamily. OBG GTPase family. Monomer. Requires Mg(2+) as cofactor.

The protein localises to the cytoplasm. Functionally, an essential GTPase which binds GTP, GDP and possibly (p)ppGpp with moderate affinity, with high nucleotide exchange rates and a fairly low GTP hydrolysis rate. Plays a role in control of the cell cycle, stress response, ribosome biogenesis and in those bacteria that undergo differentiation, in morphogenesis control. The chain is GTPase Obg from Prochlorococcus marinus (strain MIT 9313).